Consider the following 575-residue polypeptide: Proline--tRNA ligase (575 aa).

Belongs to the class-II aminoacyl-tRNA synthetase family. ProS type 1 subfamily. As to quaternary structure, homodimer.

It localises to the cytoplasm. It carries out the reaction tRNA(Pro) + L-proline + ATP = L-prolyl-tRNA(Pro) + AMP + diphosphate. Functionally, catalyzes the attachment of proline to tRNA(Pro) in a two-step reaction: proline is first activated by ATP to form Pro-AMP and then transferred to the acceptor end of tRNA(Pro). As ProRS can inadvertently accommodate and process non-cognate amino acids such as alanine and cysteine, to avoid such errors it has two additional distinct editing activities against alanine. One activity is designated as 'pretransfer' editing and involves the tRNA(Pro)-independent hydrolysis of activated Ala-AMP. The other activity is designated 'posttransfer' editing and involves deacylation of mischarged Ala-tRNA(Pro). The misacylated Cys-tRNA(Pro) is not edited by ProRS. The sequence is that of Proline--tRNA ligase from Pseudothermotoga lettingae (strain ATCC BAA-301 / DSM 14385 / NBRC 107922 / TMO) (Thermotoga lettingae).